The primary structure comprises 363 residues: Cytoskeleton protein RodZ (363 aa).

At 1-111 the chain is on the cytoplasmic side; sequence MNTEASQDQT…LGKKHKKRDG (111 aa). An HTH cro/C1-type domain is found at 19–79; the sequence is LRQARESLGL…KLVHLPEDEL (61 aa). The segment at residues 30–49 is a DNA-binding region (H-T-H motif); that stretch reads QQTVAERLCLKVSTIRDIEE. Residues 112–132 traverse the membrane as a helical; Signal-anchor for type II membrane protein segment; it reads WLMSFTWLIVLVVLGLTGAWW. Topologically, residues 133–363 are periplasmic; the sequence is WQNHQAQQAE…RVARLTVGVE (231 aa). The disordered stretch occupies residues 151 to 277; that stretch reads SAQLSQNGGQ…PLPTADAGVS (127 aa). Residues 188-199 are compositionally biased toward polar residues; sequence PLTNHSVSAITN. The segment covering 200 to 225 has biased composition (low complexity); sequence SAPTTSSVPTTSSATTSSVPTTSSVP. Residues 226 to 243 are compositionally biased toward polar residues; the sequence is KINSTEPVDTANTNTTMH. Low complexity predominate over residues 247-259; the sequence is AASAAVSPSQVPQ.

This sequence belongs to the RodZ family.

The protein resides in the cell inner membrane. In terms of biological role, cytoskeletal protein that is involved in cell-shape control through regulation of the length of the long axis. The protein is Cytoskeleton protein RodZ of Yersinia pseudotuberculosis serotype O:1b (strain IP 31758).